We begin with the raw amino-acid sequence, 32 residues long: Delta-conotoxin EVIA (32 aa).

3 disulfide bridges follow: Cys3-Cys21, Cys10-Cys25, and Cys20-Cys29. Position 6 is a 4-hydroxyproline (Pro6). Leu32 is subject to Leucine amide.

Belongs to the conotoxin O1 superfamily. As to expression, expressed by the venom duct.

It is found in the secreted. Its function is as follows. Delta-conotoxins bind to site 6 of voltage-gated sodium channels and inhibit the inactivation process. This toxin inhibits sodium channel inactivation in neuronal membranes from amphibians and mammals (Nav1.2a/SCN1A, Nav1.3/SCN3A and Nav1.6/SCN8A) upon binding to receptor site 6. The chain is Delta-conotoxin EVIA from Conus ermineus (Agate cone).